Here is a 269-residue protein sequence, read N- to C-terminus: Hydroxyethylthiazole kinase (269 aa).

Substrate is bound at residue Met42. 2 residues coordinate ATP: Arg118 and Ser164. Gly191 lines the substrate pocket.

This sequence belongs to the Thz kinase family. Mg(2+) serves as cofactor.

The enzyme catalyses 5-(2-hydroxyethyl)-4-methylthiazole + ATP = 4-methyl-5-(2-phosphooxyethyl)-thiazole + ADP + H(+). It participates in cofactor biosynthesis; thiamine diphosphate biosynthesis; 4-methyl-5-(2-phosphoethyl)-thiazole from 5-(2-hydroxyethyl)-4-methylthiazole: step 1/1. Functionally, catalyzes the phosphorylation of the hydroxyl group of 4-methyl-5-beta-hydroxyethylthiazole (THZ). The chain is Hydroxyethylthiazole kinase from Listeria monocytogenes serotype 4b (strain F2365).